The primary structure comprises 43 residues: Truncated K3L homolog (43 aa).

It belongs to the orthopoxvirus OPG041 family.

The sequence is that of Truncated K3L homolog (OPG041) from Cynomys gunnisoni (Gunnison's prairie dog).